Reading from the N-terminus, the 238-residue chain is MGRKWANIVAKKTAKDGATSKVYAKFGVEIYVAAKQGEPDPELNTALKFVIDRAKQAQVPKHVIDKAIDKAKGNTDETFVEGRYEGFGPNGSMIIVDTLTSNVNRTAANVRTAYGKNGGNMGASGSVSYLFDKKGVIVFAGDDADSVFEQLLEADVDVDDVEAEEGTITVYTAPTDLHKGIQALRDNGVEEFQVTELEMIPQSEVVLEGDDLETFEKLIDALESDDDVQKVYHNVADF.

It belongs to the TACO1 family. YeeN subfamily.

Its subcellular location is the cytoplasm. In Streptococcus pyogenes serotype M12 (strain MGAS2096), this protein is Probable transcriptional regulatory protein MGAS2096_Spy0287.